A 358-amino-acid chain; its full sequence is MDLQNKPQILEHLHKSLTVTLYDCRWIPGTAKFVTLGSYARNTGCLQVYELEGPDLKTVKETEKKHSFKCGTFGASSLAERRLATGNFGGEVQIWDLENTAQPVFTAQAHASIVNAIDGCGGQAKGYGAPELATCGRDGCVRVWDVRQQDAPVAAFEPADPNNVRDCWCVAFGNSFNDNERCLLAGYDNGDVKMFDLRMNKVRWETNVRNGVCGLQFDRKDISMNKFAVCCLEAQFHVFDARTQHPKKGFASVSEKITAGATVWGAQHLPQNREVFMVSAGDGNLYLYKYHYPDQRKVKDHDGQELGVAGSVEMLNYKNISTQPVAGFDWSPDKEGLFACVAFDQAVRVGIVTKLNKV.

6 WD repeats span residues 63-105 (EKKH…QPVF), 109-154 (AHAS…APVA), 162-205 (NNVR…VRWE), 207-249 (NVRN…PKKG), 258-298 (TAGA…QRKV), and 320-358 (ISTQ…LNKV).

Interacts with PIH1D1; the interaction associates DNAAF10 with the R2TP complex. Interacts with several dynein axonemal assembly factors.

The protein localises to the dynein axonemal particle. Its function is as follows. Key assembly factor specifically required for the stability of axonemal dynein heavy chains in cytoplasm. This is Dynein axonemal assembly factor 10 (dnaaf10) from Chlamydomonas reinhardtii (Chlamydomonas smithii).